The sequence spans 128 residues: MKRSSQDSGSRSIPEDRKLYVVDSINDLNKLNLCPAGSQQLFPLEEKLQDISTDSGNGSRSLFLVGLIIVLIISLALVSFVIFLIVQTENKMEDVSRRLAAEGKDIDDLKKINSIIVKRLNQLDSEQS.

Position 24 is a phosphoserine (S24). Residues 65–85 (VGLIIVLIISLALVSFVIFLI) traverse the membrane as a helical segment. Residues 87-111 (QTENKMEDVSRRLAAEGKDIDDLKK) are a coiled coil.

Its subcellular location is the membrane. The polypeptide is Leucine-rich single-pass membrane protein 1 (LSMEM1) (Bos taurus (Bovine)).